A 2513-amino-acid chain; its full sequence is Polyprotein P1234 (2513 aa).

The region spanning 28–259 (EPKQVTPNDH…ESRKLLQSWH (232 aa)) is the Alphavirus-like MT domain. A nsP1 membrane-binding region spans residues 244 to 263 (GSTLYPESRKLLQSWHLPSV). 2 S-palmitoyl cysteine; by host lipidation sites follow: Cys417 and Cys419. One can recognise a (+)RNA virus helicase ATP-binding domain in the interval 690-842 (DLTSPPYHEF…HNICTQVYHK (153 aa)). A ribonucleoside 5'-triphosphate is bound at residue 721-728 (GVPGSGKS). Residues 843 to 991 (SISRRCTLPV…IKEWEAEHAS (149 aa)) form the (+)RNA virus helicase C-terminal domain. Positions 1004–1327 (DTFQNKANVC…NQLNAVYAGL (324 aa)) constitute a Peptidase C9 domain. The tract at residues 1005–1024 (TFQNKANVCWAKCLVPILDT) is nucleolus localization signal. Cys1013 (for cysteine protease nsP2 activity) is an active-site residue. The Nuclear export signal motif lies at 1058-1067 (TRIYGVDLDS). His1083 functions as the For cysteine protease nsP2 activity in the catalytic mechanism. The Nuclear localization signal motif lies at 1182–1186 (PTKRV). Residues Asp1343, Asn1357, Gly1365, Gly1445, Val1446, and Tyr1447 each contribute to the ADP-D-ribose site. The Zn(2+) site is built by Cys1595, Cys1597, Cys1620, and Cys1638. 2 consecutive short sequence motifs (FGDF; binding to host G3BP1) follow at residues 1851–1854 (FGDF) and 1869–1872 (FGDF). A RdRp catalytic domain is found at 2267-2382 (DAVLETDIAS…HGVVSDALMA (116 aa)).

Interacts with non-structural protein 3. Interacts with RNA-directed RNA polymerase nsP4. Interacts with protease nsP2. interacts with itself. As to quaternary structure, interacts with mRNA-capping enzyme nsP1. Interacts with host DDX1. Interacts with host DDX3. Interacts (via C-terminus) with host G3BP1; this interaction inhibits the formation of host stress granules on viral mRNAs and the nsp3-G3BP1 complexes bind viral RNAs and probably orchestrate the assembly of viral replication complexes. Interacts (via C-terminus) with host G3BP2; this interaction inhibits the formation of host stress granules on viral mRNAs and the nsp3-G3BP2 complexes bind viral RNAs and probably orchestrate the assembly of viral replication complexes. In terms of assembly, interacts with mRNA-capping enzyme nsP1. Interacts with protease nsP2. interacts with itself. Interacts with RNA-directed RNA polymerase nsP4. Interacts with mRNA-capping enzyme nsP1. Interacts with KPNA1/karyopherin-alpha1; this interaction probably allows the active transport of protease nsP2 into the host nucleus. Requires Mg(2+) as cofactor. Mn(2+) serves as cofactor. In terms of processing, specific enzymatic cleavages in vivo yield mature proteins. The processing of the polyprotein is temporally regulated. In early stages (1.7 hpi), P1234 is first cleaved in trans through its nsP2 protease activity, releasing P123 and nsP4, which associate to form the early replication complex. At the same time, P1234 is also cut at the nsP1/nsP2 site early in infection but with lower efficiency. After replication of the viral minus-strand RNAs (4 hpi), the polyproteins are cut at the nsP1/nsP2 and nsP2/nsP3 sites very efficiently, preventing accumulation of P123 and P1234 and allowing the formation of the late replication complex. NsP3/nsP4 site is not cleaved anymore and P34 is produced rather than nsP4. Post-translationally, specific enzymatic cleavages in vivo yield mature proteins. The processing of the polyprotein is temporally regulated. In early stages (1.7 hpi), P123 is cleaved at the nsP1/nsP2 site with low efficiency. After replication of the viral minus-strand RNAs (4 hpi), the polyproteins are cut at the nsP1/nsP2 and nsP2/nsP3 sites very efficiently, preventing accumulation of P123 and allowing the formation of the late replication complex. Palmitoylated by host palmitoyltransferases ZDHHC2 and ZDHHC19. In terms of processing, phosphorylated by host on serines and threonines. Post-translationally, ubiquitinated; targets the protein for rapid degradation via the ubiquitin system. Nsp4 is present in extremely low quantities due to low frequency of translation through the amber stop-codon and the degradation by the ubiquitin pathway.

It localises to the host cytoplasmic vesicle membrane. It is found in the host cell membrane. Its subcellular location is the host cell projection. The protein resides in the host filopodium. The protein localises to the host nucleus. It localises to the host cytoplasm. The catalysed reaction is GTP + S-adenosyl-L-methionine = N(7)-methyl-GTP + S-adenosyl-L-homocysteine. The enzyme catalyses N(7)-methyl-GTP + L-histidyl-[protein] = N(tele)-(N(7)-methylguanosine 5'-phospho)-L-histidyl-[protein] + diphosphate. It carries out the reaction N(tele)-(N(7)-methylguanosine 5'-phospho)-L-histidyl-[protein] + a 5'-end diphospho-(purine-ribonucleoside) in mRNA + H(+) = a 5'-end (N(7)-methyl 5'-triphosphoguanosine)-(purine-ribonucleoside) in mRNA + L-histidyl-[protein]. It catalyses the reaction a 5'-end triphospho-ribonucleoside in mRNA + H2O = a 5'-end diphospho-ribonucleoside in mRNA + phosphate + H(+). The catalysed reaction is a ribonucleoside 5'-triphosphate + H2O = a ribonucleoside 5'-diphosphate + phosphate + H(+). The enzyme catalyses ATP + H2O = ADP + phosphate + H(+). It carries out the reaction RNA(n) + a ribonucleoside 5'-triphosphate = RNA(n+1) + diphosphate. It catalyses the reaction 4-O-(ADP-D-ribosyl)-L-aspartyl-[protein] + H2O = L-aspartyl-[protein] + ADP-D-ribose + H(+). The catalysed reaction is 5-O-(ADP-D-ribosyl)-L-glutamyl-[protein] + H2O = L-glutamyl-[protein] + ADP-D-ribose + H(+). The enzyme catalyses RNA(n) + ATP = RNA(n)-3'-adenine ribonucleotide + diphosphate. It carries out the reaction ADP-alpha-D-ribose 1''-phosphate + H2O = ADP-D-ribose + phosphate. In terms of biological role, inactive precursor of the viral replicase, which is activated by cleavages carried out by the viral protease nsP2. The early replication complex formed by the polyprotein P123 and nsP4 synthesizes minus-strand RNAs. As soon P123 is cleaved into mature proteins, the plus-strand RNAs synthesis begins. Its function is as follows. Cytoplasmic capping enzyme that catalyzes two virus-specific reactions: methyltransferase and nsP1 guanylyltransferase. mRNA-capping is necessary since all viral RNAs are synthesized in the cytoplasm, and host capping enzymes are restricted to the nucleus. The enzymatic reaction involves a covalent link between 7-methyl-GMP and nsP1, whereas eukaryotic capping enzymes form a covalent complex only with GMP. nsP1 capping consists in the following reactions: GTP is first methylated into 7-methyl-GMP and then is covalently linked to nsP1 to form the m7GMp-nsP1 complex from which 7-methyl-GMP complex is transferred to the mRNA to create the cap structure. NsP1 is also needed for the initiation of the minus-strand RNAs synthesis. Probably serves as a membrane anchor for the replication complex composed of nsP1-nsP4. Palmitoylated nsP1 is remodeling host cell cytoskeleton, and induces filopodium-like structure formation at the surface of the host cell. Functionally, multifunctional protein whose N-terminus is part of the RNA polymerase complex and displays NTPase, RNA triphosphatase and helicase activities. NTPase and RNA triphosphatase are involved in viral RNA capping and helicase keeps a check on the dsRNA replication intermediates. The C-terminus harbors a protease that specifically cleaves the polyproteins and releases the mature proteins. Required for the shutoff of minus-strand RNAs synthesis. Specifically inhibits the host IFN response by promoting the nuclear export of host STAT1. Also inhibits host transcription by inducing the rapid proteasome-dependent degradation of POLR2A, a catalytic subunit of the RNAPII complex. The resulting inhibition of cellular protein synthesis serves to ensure maximal viral gene expression and to evade host immune response. In terms of biological role, seems to be essential for minus-strand RNAs and subgenomic 26S mRNAs synthesis. Displays mono-ADP-ribosylhydrolase activity. ADP-ribosylation is a post-translational modification that controls various processes of the host cell and the virus probably needs to revert it for optimal viral replication. Binds proteins of G3BP family and sequesters them into the viral RNA replication complexes thereby inhibiting the formation of host stress granules on viral mRNAs. The nsp3-G3BP complexes bind viral RNAs and probably orchestrate the assembly of viral replication complexes, thanks to the ability of G3BP family members to self-assemble and bind DNA. RNA dependent RNA polymerase. Replicates genomic and antigenomic RNA by recognizing replications specific signals. The early replication complex formed by the polyprotein P123 and nsP4 synthesizes minus-strand RNAs. The late replication complex composed of fully processed nsP1-nsP4 is responsible for the production of genomic and subgenomic plus-strand RNAs. This chain is Polyprotein P1234, found in Anopheles (Human).